The primary structure comprises 152 residues: Phosphopantetheine adenylyltransferase (152 aa).

Serine 9 lines the substrate pocket. Residues serine 9–phenylalanine 10 and histidine 17 each bind ATP. Substrate contacts are provided by lysine 41, threonine 73, and arginine 87. Residues glycine 88 to arginine 90, glutamate 98, and threonine 122 to serine 128 contribute to the ATP site.

Belongs to the bacterial CoaD family. Homohexamer. The cofactor is Mg(2+).

The protein localises to the cytoplasm. The catalysed reaction is (R)-4'-phosphopantetheine + ATP + H(+) = 3'-dephospho-CoA + diphosphate. The protein operates within cofactor biosynthesis; coenzyme A biosynthesis; CoA from (R)-pantothenate: step 4/5. In terms of biological role, reversibly transfers an adenylyl group from ATP to 4'-phosphopantetheine, yielding dephospho-CoA (dPCoA) and pyrophosphate. The chain is Phosphopantetheine adenylyltransferase from Flavobacterium johnsoniae (strain ATCC 17061 / DSM 2064 / JCM 8514 / BCRC 14874 / CCUG 350202 / NBRC 14942 / NCIMB 11054 / UW101) (Cytophaga johnsonae).